The sequence spans 311 residues: MFTVDMVDTLFKYSKFMYECGNYTVASVCLYYYRNLVNQADPNYLNALYGKLASEILLQEWEHARDDLLKLRAYIDANPFDTEWELVTQRAWLMHWALFVYYNYPKGRDEIIEMFLNQQPYLNAIQVLAPHLLRYLAVAVVTSKSRQKNSLKDLVKVIDIERHSYKDPVTDFLTCLYIKYDFDEAQEMLQKCEEVLSNDFFLTAVLGDFRESARLLIFEMFCRIHQCITIEMLARRLNMSQEEAERWIVDLIRTYRIEGAKIDSKLGQVVMGVKSVSIHEQVMENTKRLTLRAQQIALQLEKGRQDKVKAN.

The PCI domain maps to 100 to 280 (VYYNYPKGRD…MGVKSVSIHE (181 aa)).

This sequence belongs to the eIF-3 subunit E family. In terms of assembly, component of the eukaryotic translation initiation factor 3 (eIF-3) complex.

The protein resides in the cytoplasm. Functionally, component of the eukaryotic translation initiation factor 3 (eIF-3) complex, which is involved in protein synthesis of a specialized repertoire of mRNAs and, together with other initiation factors, stimulates binding of mRNA and methionyl-tRNAi to the 40S ribosome. The eIF-3 complex specifically targets and initiates translation of a subset of mRNAs involved in cell proliferation. This is Eukaryotic translation initiation factor 3 subunit E from Caenorhabditis briggsae.